A 231-amino-acid chain; its full sequence is MLLTPTELERLTLYTAAELSRKRRSKGLRLNFPEASALIADEILEGAREGRSVAELIGFGSTILNTDDVMPGVADLLPVLQVEGTFPDGTKLVTVHQPIRPGQLPLAVMPTPGEILAPDGDIHLNGDRPTATLRAINTGDRPVQIGSHYHFFEVNKALDFPRERAFGMHLDIPAGTAVRFEPGELREVQLVQFGGTGDIHGFSGLTNGNLHDPACKLAALERARAQFFKGA.

The urease gamma stretch occupies residues 1 to 101 (MLLTPTELER…LVTVHQPIRP (101 aa)). The interval 102–231 (GQLPLAVMPT…RARAQFFKGA (130 aa)) is urease beta.

This sequence in the N-terminal section; belongs to the urease gamma subunit family. The protein in the C-terminal section; belongs to the urease beta subunit family. In terms of assembly, heterohexamer of 3 UreC (alpha) and 3 UreAB (gamma/beta) subunits.

Its subcellular location is the cytoplasm. It carries out the reaction urea + 2 H2O + H(+) = hydrogencarbonate + 2 NH4(+). The protein operates within nitrogen metabolism; urea degradation; CO(2) and NH(3) from urea (urease route): step 1/1. In Pseudomonas syringae pv. syringae (strain B728a), this protein is Urease subunit gamma/beta.